A 149-amino-acid polypeptide reads, in one-letter code: Putative pre-16S rRNA nuclease (149 aa).

This sequence belongs to the YqgF nuclease family.

Its subcellular location is the cytoplasm. Functionally, could be a nuclease involved in processing of the 5'-end of pre-16S rRNA. The sequence is that of Putative pre-16S rRNA nuclease from Burkholderia multivorans (strain ATCC 17616 / 249).